The primary structure comprises 1722 residues: MDDDDAKLKAEIEAELDKLSISSLEKEDIESDAKSETQSDDSDTDSVELPESVLHCINIIKNRSKAVEELILQDLEDTDILSCSYGAVSNNHMHLRTGLSTEYEESSEQLIKILSEIEKEEFMRSKTDCATPDFVPEPSPHDLPMDEHVLPDDADINFGYCEVEEKCRQSFEAWQEKQKELEDKEKQTLKAQRDREEKQFQEEEEKRHCWMKQFKVEKKKLENIQKQEQDKMNDELYKEEKIWKEKFKQHEEYIRNLHLQMEEERTRFKDQQEKEKNSLLKQQNNAAVKIQAKYKAFVAYQKYGPIIKEQIESKKRKAQEWKEKEAKIRQKEEENRKRLEEEQRIKEERKKQKEEERKRREKEYEEKKNIVKQEREQLISKEKIILREDASQQLIISSALKKSGYNNKHLSLEDISNDKGDIAKNLVDENSKKQEDVLLWLVEESNMKENVDRQTILKESIQVKLKESISSQTILADFKMEEKNENLAKKRCSEELVKQERKYENTDNKTELGNSDLKGNLKEQFPLQELKSDAQKEEKIMKHVINENTGQKTQIILGHNQEISEVKTNEEQKIIKDNQQKKIQKVEKEEIQEQNGLLYKDKDTLVISVKQRSLSLTSENSKDVRENVILQEKEIYSKSKEIEENPKDNAWNSGIVIFNTTDTMINIEGKRNDQDYVLGRHAPCEGLSNYNAESSMVSKEVNSLKSEIRNISEKCHENAPEPDSMTCCVSESTLLYSIEERRLAWIKSFKPWLEIFKQNQQKKIVRRKRPVKCPANMTPALDKLEILRCGPWDTLQQVTTVTFQDLPGCVLSTLAECTNLQFLSLRRCGLTSLHSLSNCKKLKYIDAQENHIEAIECENLENLCVVLLNKNQLTSLHGLDGCTNIQCLELSYNKITRIGYSFFLEEKLVDNAGFCHHLGTSTSYLSLAQVWIPTGLCWSWIPITSLTKNSDCNFLISHLYWNCGLESLKNLQQLILDHNQLINTKGLCDTPTIVYLDCSHNHLTDVEGVENCGLLQILKLQGNYLSELPSLENLVLLRELHLDDNSISTVEAFSSYWLPLLQNITISQNSLTKIVPLFHFVSLEKLDVSHNCLSDLKSAIKWFDACYSLHELSLTGNPLLQETNWRDSLLKVLPALRILNGNILNSNSESRTEEHNQLGSAGFLALCQSQIREFNLLIENYITGKGDVFTLDTAENLCHYFKKLMILSTEYRHAHERGDVTITKKDESEAQKNHLAPTNSDSTLQNGVFYSCAREGEPDSPDIPEKWMDSVSSHSPLSKSATCENMEGRHQEILVCQKREDSKASSIPTIRIPFKEVVMTNSLLRNHQNIEPSEKIMAAVVIQSYWRGYLMRRQTHFSTRLHTAATEGLPNSSIKNQTILKKGKRENIVNIRKQREKAAILIQAVWKGFILRKKLTTALEAIKNEESDEEYREIDLEDFIFDEAALEEEWLALDSTRFPSQTLLLSNQLHWPKIPGNLKWDDTSFNLPSNPAQAWLCNDKENLSSSEHTQFNSRSENKTSSWTPESKTSRKSLLKSEKEKKISEEWGFKDISTAQQMLKRAQKMKSKKLKKKIDSTVRLALFKNNENKVSLPKSPKMVQPRRDGYFEGIEEDPIHKDTTANEKLERNREYTYQWLHTQVGVHETTSSRNMKCNHFLPELDPDVLNGGRVQLVARLVSREDTDLDLFSMTNGSALSVNREKKNQAHRHSAGSSSKLWFPSKLI.

Disordered stretches follow at residues 23–47 (SLEK…TDSV), 182–202 (EDKE…QFQE), 265–285 (RTRF…QQNN), and 319–367 (QEWK…YEEK). The segment covering 38–47 (QSDDSDTDSV) has biased composition (acidic residues). The span at 265 to 278 (RTRFKDQQEKEKNS) shows a compositional bias: basic and acidic residues. The 30-residue stretch at 283-312 (QNNAAVKIQAKYKAFVAYQKYGPIIKEQIE) folds into the IQ 1 domain. LRR repeat units follow at residues 819–840 (NLQF…SNCK), 841–861 (KLKY…ENLE), 862–883 (NLCV…DGCT), 884–905 (NIQC…FFLE), 970–991 (NLQQ…CDTP), 992–1013 (TIVY…ENCG), 1014–1035 (LLQI…ENLV), 1036–1057 (LLRE…SSYW), 1060–1081 (LLQN…FHFV), and 1082–1103 (SLEK…IKWF). An LRRCT domain is found at 1117 to 1157 (NPLLQETNWRDSLLKVLPALRILNGNILNSNSESRTEEHNQ). IQ domains are found at residues 1335–1364 (KIMA…LHTA) and 1395–1424 (REKA…AIKN). Residues 1506 to 1524 (SEHTQFNSRSENKTSSWTP) show a composition bias toward polar residues. Positions 1506-1534 (SEHTQFNSRSENKTSSWTPESKTSRKSLL) are disordered.

The chain is Leucine-rich repeat- and IQ domain-containing protein 1 (LRRIQ1) from Homo sapiens (Human).